We begin with the raw amino-acid sequence, 117 residues long: 3',5'-cyclic-AMP phosphodiesterase 4A (117 aa).

Residues 42 to 79 (KQNEVEIPSPTMKDREPQEAPRQRPCQQLPPPVPHLQP) form a disordered region. The segment covering 53–63 (MKDREPQEAPR) has biased composition (basic and acidic residues). Residues 78 to 117 (QPMSQITGVKRLSHNSGLNNASIPRFGVKTDQEELLAQEL) form a catalytic region.

This sequence belongs to the cyclic nucleotide phosphodiesterase family. PDE4 subfamily. In terms of assembly, interacts with LYN (via SH3 domain). Interacts with ARRB2. Zn(2+) serves as cofactor. Requires Mg(2+) as cofactor. The cofactor is Mn(2+). In terms of processing, proteolytically cleaved by CASP3.

The protein localises to the cytoplasm. It localises to the cytosol. Its subcellular location is the membrane. The catalysed reaction is 3',5'-cyclic AMP + H2O = AMP + H(+). The protein operates within purine metabolism; 3',5'-cyclic AMP degradation; AMP from 3',5'-cyclic AMP: step 1/1. Functionally, hydrolyzes the second messenger 3',5'-cyclic AMP (cAMP), which is a key regulator of many important physiological processes. The chain is 3',5'-cyclic-AMP phosphodiesterase 4A (PDE4A) from Cavia porcellus (Guinea pig).